We begin with the raw amino-acid sequence, 420 residues long: Putative RNA-binding protein Alsin2 (420 aa).

A coiled-coil region spans residues 99–130; it reads IADCDRRTDSAKQRLKETQEELTAEVAEKANA. Basic and acidic residues-rich tracts occupy residues 242 to 259, 282 to 363, and 373 to 399; these read AELK…EGRG, RERQ…RFGD, and HHRD…HFRD. A disordered region spans residues 242 to 420; it reads AELKRTGKMT…SYSRERNYRR (179 aa).

Belongs to the Luc7 family. In terms of assembly, interacts with x16 (via Arg/Ser-rich region).

In terms of biological role, may bind to RNA via its Arg/Ser-rich domain. This Drosophila melanogaster (Fruit fly) protein is Putative RNA-binding protein Alsin2.